A 246-amino-acid polypeptide reads, in one-letter code: MTMDKSELVQKAKLAEQAERYDDMAAAMKAVTEQGHELSNEERNLLSVAYKNVVGARRSSWRVISSIEQKTERNEKKQQMGKEYREKIEAELQDICSDVLELLDKYLILNATHAESKVFYLKMKGDYFRYLSEVASGDNKQTTVSNSQQAYQEAFEISKKEMQPTHPIRLGLALNFSVFYYEILNSPEKACSLAKTAFDEAIAELDTLNEESYKDSTLIMQLLRDNLTLWTSENQGDEGDAGEGEN.

At Met1 the chain carries N-acetylmethionine. Thr2 is modified (N-acetylthreonine; in 14-3-3 protein beta/alpha, N-terminally processed). The residue at position 2 (Thr2) is a Phosphothreonine. Position 5 is an N6-acetyllysine (Lys5). N6-acetyllysine; alternate is present on Lys51. A Glycyl lysine isopeptide (Lys-Gly) (interchain with G-Cter in SUMO2); alternate cross-link involves residue Lys51. A Phosphoserine modification is found at Ser60. Lys70 is modified (N6-acetyllysine). Tyr84 and Tyr106 each carry 3'-nitrotyrosine. Lys117 carries the post-translational modification N6-acetyllysine. Residues Ser186 and Ser232 each carry the phosphoserine modification.

The protein belongs to the 14-3-3 family. Homodimer. Interacts with SAMSN1 and PRKCE. Interacts with AKAP13. Interacts with SSH1 and TORC2/CRTC2. Interacts with ABL1; the interaction results in cytoplasmic location of ABL1 and inhibition of cABL-mediated apoptosis. Interacts with ROR2 (dimer); the interaction results in phosphorylation of YWHAB on tyrosine residues. Interacts with GAB2. Interacts with YAP1 (phosphorylated form). Interacts with the phosphorylated (by AKT1) form of SRPK2. Interacts with PKA-phosphorylated AANAT. Interacts with MYO1C. Interacts with SIRT2. Interacts with the 'Thr-369' phosphorylated form of DAPK2. Interacts with PI4KB, TBC1D22A and TBC1D22B. Interacts with the 'Ser-1134' and 'Ser-1161' phosphorylated form of SOS1. Interacts (via phosphorylated form) with YWHAB; this interaction occurs in a protein kinase AKT1-dependent manner. Interacts with SLITRK1. Interacts with SYNPO2 (phosphorylated form); YWHAB competes with ACTN2 for interaction with SYNPO2. Interacts with RIPOR2 (via phosphorylated form); this interaction occurs in a chemokine-dependent manner and does not compete for binding of RIPOR2 with RHOA nor blocks inhibition of RIPOR2-mediated RHOA activity. Interacts with MARK2 and MARK3. Interacts with TESK1; the interaction is dependent on the phosphorylation of TESK1 'Ser-439' and inhibits TESK1 kinase activity. Interacts with MEFV. Interacts with HDAC4. Interacts with ADAM22 (via C-terminus). The alpha, brain-specific form differs from the beta form in being phosphorylated. Phosphorylated on Ser-60 by protein kinase C delta type catalytic subunit in a sphingosine-dependent fashion. Post-translationally, isoform Short contains a N-acetylmethionine at position 1.

Its subcellular location is the cytoplasm. It is found in the melanosome. In terms of biological role, adapter protein implicated in the regulation of a large spectrum of both general and specialized signaling pathways. Binds to a large number of partners, usually by recognition of a phosphoserine or phosphothreonine motif. Binding generally results in the modulation of the activity of the binding partner. Negative regulator of osteogenesis. Blocks the nuclear translocation of the phosphorylated form (by AKT1) of SRPK2 and antagonizes its stimulatory effect on cyclin D1 expression resulting in blockage of neuronal apoptosis elicited by SRPK2. Negative regulator of signaling cascades that mediate activation of MAP kinases via AKAP13. This Rattus norvegicus (Rat) protein is 14-3-3 protein beta/alpha (Ywhab).